A 244-amino-acid polypeptide reads, in one-letter code: L-xylulose reductase (244 aa).

Residue methionine 1 is modified to N-acetylmethionine. 11 to 39 (LVTGAGKGIGRSTVLALQAAGAHVVAVSR) contacts NADP(+). Arginine 21 is subject to Omega-N-methylarginine. Position 46 is a phosphoserine (serine 46). A substrate-binding site is contributed by serine 136. Residue tyrosine 149 is the Proton acceptor of the active site. Lysine 153 is a catalytic residue.

It belongs to the short-chain dehydrogenases/reductases (SDR) family. Homotetramer. In terms of tissue distribution, highly expressed in kidney and liver. Expressed in epididymis. Weakly expressed in brain, heart, lung, spleen and testis.

Its subcellular location is the membrane. It localises to the cytoplasmic vesicle. The protein localises to the secretory vesicle. The protein resides in the acrosome. The catalysed reaction is xylitol + NADP(+) = L-xylulose + NADPH + H(+). In terms of biological role, catalyzes the NADPH-dependent reduction of several pentoses, tetroses, trioses, alpha-dicarbonyl compounds and L-xylulose. Participates in the uronate cycle of glucose metabolism. May play a role in the water absorption and cellular osmoregulation in the proximal renal tubules by producing xylitol, an osmolyte, thereby preventing osmolytic stress from occurring in the renal tubules. This Mesocricetus auratus (Golden hamster) protein is L-xylulose reductase (DCXR).